Reading from the N-terminus, the 469-residue chain is Keratin, type II cytoskeletal 7 (469 aa).

S2 bears the N-acetylserine mark. A phosphoserine mark is found at S2, S6, and S7. A head region spans residues 2-90 (SIHFSSPVFT…DPSLQRVRQE (89 aa)). An O-linked (GlcNAc) serine glycan is attached at S12. A Dimethylated arginine; alternate modification is found at R20. R20 is subject to Omega-N-methylarginine; alternate. Phosphoserine occurs at positions 53, 71, and 83. Positions 90-126 (EEREQIKTLNNKFASFIDKVRFLEQQNKLLETKWTLL) are coil 1A. The region spanning 91-403 (EREQIKTLNN…KLLEGEESRL (313 aa)) is the IF rod domain. T97 carries the post-translational modification Phosphothreonine. Positions 127-144 (QEQKSAKSSRLPDIFEAQ) are linker 1. K130 participates in a covalent cross-link: Glycyl lysine isopeptide (Lys-Gly) (interchain with G-Cter in SUMO2). The tract at residues 145–236 (IAGLRGQLEA…TLNETELTEL (92 aa)) is coil 1B. K179 is subject to N6-acetyllysine. The linker 12 stretch occupies residues 237–260 (QSQISDTSVVLSMDNSRSLDLDGI). Residues S252 and S254 each carry the phosphoserine modification. Positions 261 to 399 (IAEVKAQYEE…ATYRKLLEGE (139 aa)) are coil 2. Residues K265 and K286 each participate in a glycyl lysine isopeptide (Lys-Gly) (interchain with G-Cter in SUMO2) cross-link. T289 is modified (phosphothreonine). Residues K296 and K331 each participate in a glycyl lysine isopeptide (Lys-Gly) (interchain with G-Cter in SUMO2) cross-link. Residues 400–469 (ESRLAGDGVG…ASASRRSARN (70 aa)) form a tail region.

Belongs to the intermediate filament family. In terms of assembly, heterotetramer of two type I and two type II keratins. Interacts with eukaryotic translation initiator factor 3 (eIF3) subunit EIF3S10. Interacts with GPER1. Arg-20 is dimethylated, probably to asymmetric dimethylarginine.

In terms of biological role, blocks interferon-dependent interphase and stimulates DNA synthesis in cells. This is Keratin, type II cytoskeletal 7 from Pan troglodytes (Chimpanzee).